The primary structure comprises 183 residues: Ribosome maturation factor RimP (183 aa).

Belongs to the RimP family.

The protein localises to the cytoplasm. In terms of biological role, required for maturation of 30S ribosomal subunits. The polypeptide is Ribosome maturation factor RimP (Leptothrix cholodnii (strain ATCC 51168 / LMG 8142 / SP-6) (Leptothrix discophora (strain SP-6))).